We begin with the raw amino-acid sequence, 185 residues long: Large ribosomal subunit protein uL5 (185 aa).

It belongs to the universal ribosomal protein uL5 family. Part of the 50S ribosomal subunit; part of the 5S rRNA/L5/L18/L25 subcomplex. Contacts the 5S rRNA and the P site tRNA. Forms a bridge to the 30S subunit in the 70S ribosome.

In terms of biological role, this is one of the proteins that bind and probably mediate the attachment of the 5S RNA into the large ribosomal subunit, where it forms part of the central protuberance. In the 70S ribosome it contacts protein S13 of the 30S subunit (bridge B1b), connecting the 2 subunits; this bridge is implicated in subunit movement. Contacts the P site tRNA; the 5S rRNA and some of its associated proteins might help stabilize positioning of ribosome-bound tRNAs. This chain is Large ribosomal subunit protein uL5, found in Parvibaculum lavamentivorans (strain DS-1 / DSM 13023 / NCIMB 13966).